The following is a 308-amino-acid chain: GTPase Era (308 aa).

The Era-type G domain occupies 7–181; the sequence is RCGWVALIGP…LRLIVGYMPE (175 aa). Residues 15-22 are G1; the sequence is GPPNAGKS. A GTP-binding site is contributed by 15 to 22; that stretch reads GPPNAGKS. The G2 stretch occupies residues 41–45; it reads QTTRN. A G3 region spans residues 62 to 65; it reads DTPG. GTP-binding positions include 62–66 and 130–133; these read DTPGI and NKID. Positions 130–133 are G4; the sequence is NKID. The segment at 160–162 is G5; the sequence is ASA. One can recognise a KH type-2 domain in the interval 212–290; the sequence is LRQELPYSTA…HLELWVKVRE (79 aa).

The protein belongs to the TRAFAC class TrmE-Era-EngA-EngB-Septin-like GTPase superfamily. Era GTPase family. Monomer.

It localises to the cytoplasm. Its subcellular location is the cell inner membrane. Functionally, an essential GTPase that binds both GDP and GTP, with rapid nucleotide exchange. Plays a role in 16S rRNA processing and 30S ribosomal subunit biogenesis and possibly also in cell cycle regulation and energy metabolism. The protein is GTPase Era of Nitratidesulfovibrio vulgaris (strain DP4) (Desulfovibrio vulgaris).